A 263-amino-acid chain; its full sequence is Endonuclease 8 (263 aa).

Pro-2 acts as the Schiff-base intermediate with DNA in catalysis. Catalysis depends on Glu-3, which acts as the Proton donor. Lys-53 acts as the Proton donor; for beta-elimination activity in catalysis. Residues Gln-70, Arg-125, and Asn-169 each coordinate DNA. The FPG-type zinc-finger motif lies at 229–263 (KVFHRDGEACERCGGIIEKTTLSSRPFYWCPHCQK). The active-site Proton donor; for delta-elimination activity is Arg-253.

It belongs to the FPG family. It depends on Zn(2+) as a cofactor.

The enzyme catalyses 2'-deoxyribonucleotide-(2'-deoxyribose 5'-phosphate)-2'-deoxyribonucleotide-DNA = a 3'-end 2'-deoxyribonucleotide-(2,3-dehydro-2,3-deoxyribose 5'-phosphate)-DNA + a 5'-end 5'-phospho-2'-deoxyribonucleoside-DNA + H(+). In terms of biological role, involved in base excision repair of DNA damaged by oxidation or by mutagenic agents. Acts as a DNA glycosylase that recognizes and removes damaged bases. Has a preference for oxidized pyrimidines, such as thymine glycol, 5,6-dihydrouracil and 5,6-dihydrothymine. Has AP (apurinic/apyrimidinic) lyase activity and introduces nicks in the DNA strand. Cleaves the DNA backbone by beta-delta elimination to generate a single-strand break at the site of the removed base with both 3'- and 5'-phosphates. This chain is Endonuclease 8, found in Salmonella dublin (strain CT_02021853).